Consider the following 360-residue polypeptide: 1-deoxy-D-xylulose 5-phosphate reductoisomerase (360 aa).

NADPH is bound by residues serine 7, glycine 8, serine 9, isoleucine 10, and asparagine 115. Residue lysine 116 participates in 1-deoxy-D-xylulose 5-phosphate binding. Glutamate 117 serves as a coordination point for NADPH. Position 135 (aspartate 135) interacts with Mn(2+). 1-deoxy-D-xylulose 5-phosphate is bound by residues serine 136, glutamate 137, serine 159, and histidine 182. Residue glutamate 137 participates in Mn(2+) binding. Glycine 188 lines the NADPH pocket. Residues serine 195, asparagine 200, lysine 201, and glutamate 204 each coordinate 1-deoxy-D-xylulose 5-phosphate. Position 204 (glutamate 204) interacts with Mn(2+).

It belongs to the DXR family. Requires Mg(2+) as cofactor. Mn(2+) serves as cofactor.

The enzyme catalyses 2-C-methyl-D-erythritol 4-phosphate + NADP(+) = 1-deoxy-D-xylulose 5-phosphate + NADPH + H(+). It functions in the pathway isoprenoid biosynthesis; isopentenyl diphosphate biosynthesis via DXP pathway; isopentenyl diphosphate from 1-deoxy-D-xylulose 5-phosphate: step 1/6. Functionally, catalyzes the NADPH-dependent rearrangement and reduction of 1-deoxy-D-xylulose-5-phosphate (DXP) to 2-C-methyl-D-erythritol 4-phosphate (MEP). The sequence is that of 1-deoxy-D-xylulose 5-phosphate reductoisomerase from Campylobacter fetus subsp. fetus (strain 82-40).